The primary structure comprises 162 residues: 2-C-methyl-D-erythritol 2,4-cyclodiphosphate synthase (162 aa).

2 residues coordinate a divalent metal cation: D12 and H14. 4-CDP-2-C-methyl-D-erythritol 2-phosphate-binding positions include 12–14 and 38–39; these read DVH and HS. H46 lines the a divalent metal cation pocket. 4-CDP-2-C-methyl-D-erythritol 2-phosphate is bound by residues 60-62, 65-69, and R146; these read DIG and FPDTD.

The protein belongs to the IspF family. Homotrimer. It depends on a divalent metal cation as a cofactor.

It carries out the reaction 4-CDP-2-C-methyl-D-erythritol 2-phosphate = 2-C-methyl-D-erythritol 2,4-cyclic diphosphate + CMP. The protein operates within isoprenoid biosynthesis; isopentenyl diphosphate biosynthesis via DXP pathway; isopentenyl diphosphate from 1-deoxy-D-xylulose 5-phosphate: step 4/6. Involved in the biosynthesis of isopentenyl diphosphate (IPP) and dimethylallyl diphosphate (DMAPP), two major building blocks of isoprenoid compounds. Catalyzes the conversion of 4-diphosphocytidyl-2-C-methyl-D-erythritol 2-phosphate (CDP-ME2P) to 2-C-methyl-D-erythritol 2,4-cyclodiphosphate (ME-CPP) with a corresponding release of cytidine 5-monophosphate (CMP). This Bordetella bronchiseptica (strain ATCC BAA-588 / NCTC 13252 / RB50) (Alcaligenes bronchisepticus) protein is 2-C-methyl-D-erythritol 2,4-cyclodiphosphate synthase.